Consider the following 312-residue polypeptide: MANDNGIKHFIDLSTVPATELRAILEDAKARKARLKAGEVERPYAGKVLAMIFEKPSTRTRVSFDVGMRQLGGETIMLTGSEMQLGRSETIADTAKVLSRYVDAIMIRTTAHERMLELAEYATVPVINALTDDTHPCQIMADVLTYEEHRGPIKGKTFAWMGDGNNVLHSLVEAAARFDFNVNIATPKGSEPKSQYIDWARANGAGIMSTTDPEKAASGADCIVTDTWVSMGQEDHARGHNVFIPYQVNANLMAKADPKALFMHCLPAHRGEEVTDEVIDGPQAVVFDEAENRLHAQKAILAWCLQDRGLGA.

Carbamoyl phosphate-binding positions include 57 to 60 (STRT), Gln84, Arg108, and 135 to 138 (HPCQ). L-ornithine is bound by residues Asn166, Asp226, and 230-231 (SM). Residues 265–266 (CL) and Arg293 each bind carbamoyl phosphate.

This sequence belongs to the aspartate/ornithine carbamoyltransferase superfamily. OTCase family.

The protein localises to the cytoplasm. The enzyme catalyses carbamoyl phosphate + L-ornithine = L-citrulline + phosphate + H(+). It functions in the pathway amino-acid biosynthesis; L-arginine biosynthesis; L-arginine from L-ornithine and carbamoyl phosphate: step 1/3. Its function is as follows. Reversibly catalyzes the transfer of the carbamoyl group from carbamoyl phosphate (CP) to the N(epsilon) atom of ornithine (ORN) to produce L-citrulline. The chain is Ornithine carbamoyltransferase from Brucella ovis (strain ATCC 25840 / 63/290 / NCTC 10512).